The primary structure comprises 540 residues: T-complex protein 1 subunit alpha (540 aa).

It belongs to the TCP-1 chaperonin family. Component of the T-complex protein 1 (TCP1) complex.

The protein resides in the cytoplasm. Molecular chaperone; assists the folding of proteins upon ATP hydrolysis. The protein is T-complex protein 1 subunit alpha (TCP1) of Encephalitozoon cuniculi (strain GB-M1) (Microsporidian parasite).